A 964-amino-acid chain; its full sequence is Translation initiation factor IF-2 (964 aa).

The interval 49 to 357 is disordered; the sequence is QIGSAEPADD…QEFDEMQAPL (309 aa). The segment covering 62-85 has biased composition (low complexity); the sequence is AKPAARKSQTSSKKTSKETTTAKP. Over residues 86–102 the composition is skewed to pro residues; sequence APGPKPGPGPKPTPGPR. The segment covering 103 to 117 has biased composition (low complexity); that stretch reads PGSSSGPKPGRSSAA. Residues 159-169 show a composition bias toward pro residues; it reads PHAPAPKPKPG. Composition is skewed to low complexity over residues 190–212 and 242–251; these read GLPSAARPGPRPGAGRRTGAPRP and GQGERMPRPG. 2 stretches are compositionally biased toward gly residues: residues 252–261 and 284–334; these read GSQGSRGGSG and GRGG…GRGG. The segment covering 335–346 has biased composition (basic residues); it reads GGRRGRKSRKQR. A tr-type G domain is found at 458–629; it reads ARPPVVTVMG…AIVLTADAAL (172 aa). A G1 region spans residues 467–474; that stretch reads GHVDHGKT. 467–474 lines the GTP pocket; the sequence is GHVDHGKT. The G2 stretch occupies residues 492–496; it reads GITQA. The interval 517 to 520 is G3; it reads DTPG. Residues 517 to 521 and 571 to 574 contribute to the GTP site; these read DTPGH and NKID. The tract at residues 571–574 is G4; the sequence is NKID. The G5 stretch occupies residues 607 to 609; that stretch reads SAR.

The protein belongs to the TRAFAC class translation factor GTPase superfamily. Classic translation factor GTPase family. IF-2 subfamily.

It is found in the cytoplasm. One of the essential components for the initiation of protein synthesis. Protects formylmethionyl-tRNA from spontaneous hydrolysis and promotes its binding to the 30S ribosomal subunits. Also involved in the hydrolysis of GTP during the formation of the 70S ribosomal complex. This is Translation initiation factor IF-2 from Cutibacterium acnes (strain DSM 16379 / KPA171202) (Propionibacterium acnes).